A 681-amino-acid polypeptide reads, in one-letter code: Potassium-transporting ATPase ATP-binding subunit 1 (681 aa).

A run of 4 helical transmembrane segments spans residues 30–50, 59–79, 216–236, and 255–275; these read LLVYVGAILATSLYFLGFFGI, LAIALILWFTVLFANFAEAIA, ILLVTLSIIFLAVSATLLPFT, and IALLVCLAPTTIGALLSSIGI. The active-site 4-aspartylphosphate intermediate is D306. ATP contacts are provided by residues D343, E347, 376-383, and K394; that span reads FTATTRMS. Residues D517 and D521 each coordinate Mg(2+). A run of 3 helical transmembrane segments spans residues 587-607, 615-635, and 661-681; these read FAIIPVLFYGIFPQLEALNLM, AILSAIIYNAVIIIFLIPLSL, and LIAPFIAIKLIDMLLTVLGIV.

Belongs to the cation transport ATPase (P-type) (TC 3.A.3) family. Type IA subfamily. As to quaternary structure, the system is composed of three essential subunits: KdpA, KdpB and KdpC.

It is found in the cell membrane. The enzyme catalyses K(+)(out) + ATP + H2O = K(+)(in) + ADP + phosphate + H(+). Its function is as follows. Part of the high-affinity ATP-driven potassium transport (or Kdp) system, which catalyzes the hydrolysis of ATP coupled with the electrogenic transport of potassium into the cytoplasm. This subunit is responsible for energy coupling to the transport system and for the release of the potassium ions to the cytoplasm. This Listeria innocua serovar 6a (strain ATCC BAA-680 / CLIP 11262) protein is Potassium-transporting ATPase ATP-binding subunit 1.